A 216-amino-acid chain; its full sequence is Pyridoxine/pyridoxamine 5'-phosphate oxidase (216 aa).

Residues 12–15 (RKSY) and K70 each bind substrate. FMN contacts are provided by residues 65–70 (RVVLVK), 80–81 (FT), R86, and K87. Y127, R131, and S135 together coordinate substrate. Residues 144 to 145 (QS) and W188 contribute to the FMN site. A substrate-binding site is contributed by 194-196 (RLH). R198 serves as a coordination point for FMN.

The protein belongs to the pyridoxamine 5'-phosphate oxidase family. Homodimer. It depends on FMN as a cofactor.

It carries out the reaction pyridoxamine 5'-phosphate + O2 + H2O = pyridoxal 5'-phosphate + H2O2 + NH4(+). The enzyme catalyses pyridoxine 5'-phosphate + O2 = pyridoxal 5'-phosphate + H2O2. It participates in cofactor metabolism; pyridoxal 5'-phosphate salvage; pyridoxal 5'-phosphate from pyridoxamine 5'-phosphate: step 1/1. The protein operates within cofactor metabolism; pyridoxal 5'-phosphate salvage; pyridoxal 5'-phosphate from pyridoxine 5'-phosphate: step 1/1. Its function is as follows. Catalyzes the oxidation of either pyridoxine 5'-phosphate (PNP) or pyridoxamine 5'-phosphate (PMP) into pyridoxal 5'-phosphate (PLP). In Polaromonas sp. (strain JS666 / ATCC BAA-500), this protein is Pyridoxine/pyridoxamine 5'-phosphate oxidase.